Here is a 198-residue protein sequence, read N- to C-terminus: GTP-binding protein RHO1 (198 aa).

16–23 (GDGACGKT) lines the GTP pocket. The Effector region motif lies at 38 to 46 (YVPTVFENY). GTP is bound by residues 63 to 67 (DTAGQ) and 121 to 124 (CKSD). The residue at position 195 (cysteine 195) is a Cysteine methyl ester. Cysteine 195 is lipidated: S-geranylgeranyl cysteine. A propeptide spans 196–198 (VVL) (removed in mature form).

The protein belongs to the small GTPase superfamily. Rho family.

Its subcellular location is the cell membrane. The chain is GTP-binding protein RHO1 (RHO1) from Candida albicans (strain SC5314 / ATCC MYA-2876) (Yeast).